A 134-amino-acid chain; its full sequence is Beta-synuclein (134 aa).

2 tandem repeats follow at residues 20–30 and 31–41. The segment at 20-67 is 4 X 11 AA tandem repeats of [EGS]-K-T-K-[EQ]-[GQ]-V-X(4); sequence EKTKQGVTEAAEKTKEGVLYVGSKTKEGVVQGVASVAEKTKEQASHLG. Residues 42–56 form a 3; approximate repeat; sequence SKTKEGVVQGVASVA. Residues 57 to 67 form repeat 4; sequence EKTKEQASHLG. The disordered stretch occupies residues 97–134; sequence EVAQEAAEEPLIEPLMEPEGESYEEQPQEEYQEYEPEA. Acidic residues predominate over residues 98 to 134; sequence VAQEAAEEPLIEPLMEPEGESYEEQPQEEYQEYEPEA. A Phosphoserine; by BARK1, CK2 and GRK5 modification is found at serine 118.

It belongs to the synuclein family. In terms of processing, phosphorylated. Phosphorylation by G-protein coupled receptor kinases (GRK) is more efficient than phosphorylation by CK1, CK2 and CaM-kinase II. Specifically present in synapses around neurons but not in glial cells.

It is found in the cytoplasm. In terms of biological role, may be involved in neuronal plasticity. This Bos taurus (Bovine) protein is Beta-synuclein (SNCB).